The primary structure comprises 100 residues: NAD(P)H-quinone oxidoreductase subunit 4L, chloroplastic (100 aa).

The next 3 helical transmembrane spans lie at methionine 1 to isoleucine 21, isoleucine 27 to phenylalanine 47, and phenylalanine 61 to phenylalanine 81.

This sequence belongs to the complex I subunit 4L family. NDH is composed of at least 16 different subunits, 5 of which are encoded in the nucleus.

The protein resides in the plastid. It is found in the chloroplast thylakoid membrane. It catalyses the reaction a plastoquinone + NADH + (n+1) H(+)(in) = a plastoquinol + NAD(+) + n H(+)(out). The catalysed reaction is a plastoquinone + NADPH + (n+1) H(+)(in) = a plastoquinol + NADP(+) + n H(+)(out). Its function is as follows. NDH shuttles electrons from NAD(P)H:plastoquinone, via FMN and iron-sulfur (Fe-S) centers, to quinones in the photosynthetic chain and possibly in a chloroplast respiratory chain. The immediate electron acceptor for the enzyme in this species is believed to be plastoquinone. Couples the redox reaction to proton translocation, and thus conserves the redox energy in a proton gradient. This is NAD(P)H-quinone oxidoreductase subunit 4L, chloroplastic from Chaetosphaeridium globosum (Charophycean green alga).